Consider the following 258-residue polypeptide: uncharacterized protein (258 aa).

The next 6 helical transmembrane spans lie at 21-41 (LIWLPIAMMIVGLTQPLTIYY), 73-93 (LSQFNTLGMALVIFSVMGSVA), 119-139 (WLIQSVIGIMSFAAGYGLAYY), 153-173 (FAASLGLYALWVIFIVTAGLA), 182-202 (GAAAACGIGLTAAVSFAVSLF), and 229-249 (FFGWSLTFSILCIMLLAVFSV).

It localises to the cell membrane. This is an uncharacterized protein from Bacillus subtilis (strain 168).